The chain runs to 975 residues: Glycine dehydrogenase (decarboxylating) (975 aa).

Lysine 723 carries the post-translational modification N6-(pyridoxal phosphate)lysine.

The protein belongs to the GcvP family. As to quaternary structure, the glycine cleavage system is composed of four proteins: P, T, L and H. Pyridoxal 5'-phosphate is required as a cofactor.

The catalysed reaction is N(6)-[(R)-lipoyl]-L-lysyl-[glycine-cleavage complex H protein] + glycine + H(+) = N(6)-[(R)-S(8)-aminomethyldihydrolipoyl]-L-lysyl-[glycine-cleavage complex H protein] + CO2. The glycine cleavage system catalyzes the degradation of glycine. The P protein binds the alpha-amino group of glycine through its pyridoxal phosphate cofactor; CO(2) is released and the remaining methylamine moiety is then transferred to the lipoamide cofactor of the H protein. This chain is Glycine dehydrogenase (decarboxylating), found in Burkholderia cenocepacia (strain HI2424).